A 450-amino-acid polypeptide reads, in one-letter code: MPGIVTRFAPSPTGFLHIGGARTALFNWLYAQRHGGQFLLRIEDTDRKRSTQEAIDAIIDGLKWLGISYDGEIVYQSKRIDRHIEVANLLVEKGRAYHCYCPENEVAEKKIRAREEGKIYKHKCTHSTSNAEPVVRFKVPDSEDIVVDDKIYGQVTISSDQLDDIVILRSDNTPTYIFAVVVDDHDAGITDIIRGSDHLTNTFKQLLIYQALDFDVPRFAHVPLIHGEDGNKLSKRHGATSVCDYEKMGILPQAMRNYLLRLGWSHGNDEIISDEQAIEWFNLESIGRSPARLDFKKLEHLNNHYISNMSNEDILTLMLRENTLTDKKKGYLLQGLTELKKRANYLTELLDLAKFYIQVDLSEEAQQIVKSNLNVIKLLASFLSSVGSEDWNKNFLSSQIKEFSKLHNIKMSDIYHSLRAPITGIMDAPGIIDIMVILGKDECIKRLQAI.

A 'HIGH' region motif is present at residues 10–20 (PSPTGFLHIGG). Positions 232 to 236 (KLSKR) match the 'KMSKS' region motif. Lys235 provides a ligand contact to ATP.

It belongs to the class-I aminoacyl-tRNA synthetase family. Glutamate--tRNA ligase type 1 subfamily. As to quaternary structure, monomer.

The protein resides in the cytoplasm. It catalyses the reaction tRNA(Glu) + L-glutamate + ATP = L-glutamyl-tRNA(Glu) + AMP + diphosphate. Its function is as follows. Catalyzes the attachment of glutamate to tRNA(Glu) in a two-step reaction: glutamate is first activated by ATP to form Glu-AMP and then transferred to the acceptor end of tRNA(Glu). This Wolbachia pipientis subsp. Culex pipiens (strain wPip) protein is Glutamate--tRNA ligase 2.